Reading from the N-terminus, the 369-residue chain is Endoglucanase (369 aa).

The first 22 residues, 1-22 (MMTMLRGWITMIVMLTAINAQA), serve as a signal peptide directing secretion. Glu56 acts as the Proton donor in catalysis. Residue Asp117 is the Nucleophile of the active site.

This sequence belongs to the glycosyl hydrolase 8 (cellulase D) family.

The protein localises to the secreted. It carries out the reaction Endohydrolysis of (1-&gt;4)-beta-D-glucosidic linkages in cellulose, lichenin and cereal beta-D-glucans.. Its pathway is glycan metabolism; bacterial cellulose biosynthesis. In terms of biological role, hydrolyzes carboxymethylcellulose. The sequence is that of Endoglucanase (bcsZ) from Salmonella typhi.